A 338-amino-acid polypeptide reads, in one-letter code: Ketol-acid reductoisomerase (NADP(+)) (338 aa).

Residues 1–181 (MKVYYDKDAD…GGTKGGVIET (181 aa)) enclose the KARI N-terminal Rossmann domain. NADP(+) contacts are provided by residues 24 to 27 (YGSQ), R47, and S52. Residue H107 is part of the active site. An NADP(+)-binding site is contributed by G133. Residues 182 to 327 (NFREETETDL…GQLRDMMPWI (146 aa)) enclose the KARI C-terminal knotted domain. Positions 190, 194, 226, and 230 each coordinate Mg(2+). A substrate-binding site is contributed by S251.

Belongs to the ketol-acid reductoisomerase family. Requires Mg(2+) as cofactor.

It carries out the reaction (2R)-2,3-dihydroxy-3-methylbutanoate + NADP(+) = (2S)-2-acetolactate + NADPH + H(+). It catalyses the reaction (2R,3R)-2,3-dihydroxy-3-methylpentanoate + NADP(+) = (S)-2-ethyl-2-hydroxy-3-oxobutanoate + NADPH + H(+). It functions in the pathway amino-acid biosynthesis; L-isoleucine biosynthesis; L-isoleucine from 2-oxobutanoate: step 2/4. It participates in amino-acid biosynthesis; L-valine biosynthesis; L-valine from pyruvate: step 2/4. Functionally, involved in the biosynthesis of branched-chain amino acids (BCAA). Catalyzes an alkyl-migration followed by a ketol-acid reduction of (S)-2-acetolactate (S2AL) to yield (R)-2,3-dihydroxy-isovalerate. In the isomerase reaction, S2AL is rearranged via a Mg-dependent methyl migration to produce 3-hydroxy-3-methyl-2-ketobutyrate (HMKB). In the reductase reaction, this 2-ketoacid undergoes a metal-dependent reduction by NADPH to yield (R)-2,3-dihydroxy-isovalerate. This Dechloromonas aromatica (strain RCB) protein is Ketol-acid reductoisomerase (NADP(+)).